The following is a 306-amino-acid chain: Homeobox protein Hox-C13a (306 aa).

The interval 68–90 is disordered; sequence SVYSDISSPDTGRQCPAPQTSSS. Residues 236-295 constitute a DNA-binding region (homeobox); sequence GRKKRVPYTKLQLKELEKEYAASKFITKDKRRRISAATNLSERQVTIWFQNRRVKEKKFI.

Belongs to the Abd-B homeobox family.

The protein resides in the nucleus. Sequence-specific transcription factor which is part of a developmental regulatory system that provides cells with specific positional identities on the anterior-posterior axis. The protein is Homeobox protein Hox-C13a (hoxc13a) of Takifugu rubripes (Japanese pufferfish).